The chain runs to 955 residues: Isoleucine--tRNA ligase (955 aa).

A 'HIGH' region motif is present at residues 58–68 (IYANGDIHIGH). Glutamate 552 is a binding site for L-isoleucyl-5'-AMP. The 'KMSKS' region motif lies at 593 to 597 (KMSKS). Residue lysine 596 participates in ATP binding. Positions 918, 921, 938, and 941 each coordinate Zn(2+).

Belongs to the class-I aminoacyl-tRNA synthetase family. IleS type 1 subfamily. As to quaternary structure, monomer. Zn(2+) is required as a cofactor.

It localises to the cytoplasm. It catalyses the reaction tRNA(Ile) + L-isoleucine + ATP = L-isoleucyl-tRNA(Ile) + AMP + diphosphate. In terms of biological role, catalyzes the attachment of isoleucine to tRNA(Ile). As IleRS can inadvertently accommodate and process structurally similar amino acids such as valine, to avoid such errors it has two additional distinct tRNA(Ile)-dependent editing activities. One activity is designated as 'pretransfer' editing and involves the hydrolysis of activated Val-AMP. The other activity is designated 'posttransfer' editing and involves deacylation of mischarged Val-tRNA(Ile). This chain is Isoleucine--tRNA ligase, found in Vesicomyosocius okutanii subsp. Calyptogena okutanii (strain HA).